The chain runs to 276 residues: Methylesterase 17 (276 aa).

One can recognise an AB hydrolase-1 domain in the interval 19 to 138 (PHFVLIHGMS…TDEDMKDGVP (120 aa)). The Acyl-ester intermediate role is filled by Ser-95. Residues Asp-225 and His-252 each act as charge relay system in the active site.

It belongs to the AB hydrolase superfamily. Methylesterase family. As to expression, expressed in several tissues of seedlings and adult plants, with a higher relative level of expression in the seedling shoot apex and the adult stem.

It carries out the reaction methyl (indol-3-yl)acetate + H2O = (indol-3-yl)acetate + methanol + H(+). Its pathway is plant hormone biosynthesis. Its function is as follows. Methylesterase that efficiently and specifically hydrolyzes methyl indole-3-acetic acid (MeIAA) to IAA (auxin). MeIAA is believed to be an inactive form of auxin that needs to be demethylated to exert a biological effect. This Arabidopsis thaliana (Mouse-ear cress) protein is Methylesterase 17.